A 122-amino-acid chain; its full sequence is Large ribosomal subunit protein uL14 (122 aa).

The protein belongs to the universal ribosomal protein uL14 family. As to quaternary structure, part of the 50S ribosomal subunit. Forms a cluster with proteins L3 and L19. In the 70S ribosome, L14 and L19 interact and together make contacts with the 16S rRNA in bridges B5 and B8.

Functionally, binds to 23S rRNA. Forms part of two intersubunit bridges in the 70S ribosome. This Lactococcus lactis subsp. lactis (strain IL1403) (Streptococcus lactis) protein is Large ribosomal subunit protein uL14.